A 335-amino-acid polypeptide reads, in one-letter code: N-acetyl-gamma-glutamyl-phosphate reductase (335 aa).

Residue Cys156 is part of the active site.

Belongs to the NAGSA dehydrogenase family. Type 1 subfamily.

It is found in the cytoplasm. The enzyme catalyses N-acetyl-L-glutamate 5-semialdehyde + phosphate + NADP(+) = N-acetyl-L-glutamyl 5-phosphate + NADPH + H(+). The protein operates within amino-acid biosynthesis; L-arginine biosynthesis; N(2)-acetyl-L-ornithine from L-glutamate: step 3/4. Functionally, catalyzes the NADPH-dependent reduction of N-acetyl-5-glutamyl phosphate to yield N-acetyl-L-glutamate 5-semialdehyde. The protein is N-acetyl-gamma-glutamyl-phosphate reductase of Aeromonas hydrophila subsp. hydrophila (strain ATCC 7966 / DSM 30187 / BCRC 13018 / CCUG 14551 / JCM 1027 / KCTC 2358 / NCIMB 9240 / NCTC 8049).